We begin with the raw amino-acid sequence, 214 residues long: Thymidylate kinase (214 aa).

An ATP-binding site is contributed by 10-17; the sequence is GPDGAGKT.

The protein belongs to the thymidylate kinase family.

The enzyme catalyses dTMP + ATP = dTDP + ADP. Its function is as follows. Phosphorylation of dTMP to form dTDP in both de novo and salvage pathways of dTTP synthesis. In Levilactobacillus brevis (strain ATCC 367 / BCRC 12310 / CIP 105137 / JCM 1170 / LMG 11437 / NCIMB 947 / NCTC 947) (Lactobacillus brevis), this protein is Thymidylate kinase.